Consider the following 155-residue polypeptide: Ribosomal RNA large subunit methyltransferase H (155 aa).

S-adenosyl-L-methionine is bound by residues Leu73, Gly104, and Leu123–Phe128.

Belongs to the RNA methyltransferase RlmH family. Homodimer.

It is found in the cytoplasm. The enzyme catalyses pseudouridine(1915) in 23S rRNA + S-adenosyl-L-methionine = N(3)-methylpseudouridine(1915) in 23S rRNA + S-adenosyl-L-homocysteine + H(+). Specifically methylates the pseudouridine at position 1915 (m3Psi1915) in 23S rRNA. This chain is Ribosomal RNA large subunit methyltransferase H, found in Methylococcus capsulatus (strain ATCC 33009 / NCIMB 11132 / Bath).